Consider the following 170-residue polypeptide: Putative pre-16S rRNA nuclease (170 aa).

The protein belongs to the YqgF nuclease family.

It is found in the cytoplasm. In terms of biological role, could be a nuclease involved in processing of the 5'-end of pre-16S rRNA. This is Putative pre-16S rRNA nuclease from Synechococcus sp. (strain JA-2-3B'a(2-13)) (Cyanobacteria bacterium Yellowstone B-Prime).